The sequence spans 187 residues: Crossover junction endodeoxyribonuclease RuvC (187 aa).

Residues D7, E67, and D140 contribute to the active site. Positions 7, 67, and 140 each coordinate Mg(2+).

It belongs to the RuvC family. As to quaternary structure, homodimer which binds Holliday junction (HJ) DNA. The HJ becomes 2-fold symmetrical on binding to RuvC with unstacked arms; it has a different conformation from HJ DNA in complex with RuvA. In the full resolvosome a probable DNA-RuvA(4)-RuvB(12)-RuvC(2) complex forms which resolves the HJ. Mg(2+) is required as a cofactor.

The protein resides in the cytoplasm. The enzyme catalyses Endonucleolytic cleavage at a junction such as a reciprocal single-stranded crossover between two homologous DNA duplexes (Holliday junction).. Functionally, the RuvA-RuvB-RuvC complex processes Holliday junction (HJ) DNA during genetic recombination and DNA repair. Endonuclease that resolves HJ intermediates. Cleaves cruciform DNA by making single-stranded nicks across the HJ at symmetrical positions within the homologous arms, yielding a 5'-phosphate and a 3'-hydroxyl group; requires a central core of homology in the junction. The consensus cleavage sequence is 5'-(A/T)TT(C/G)-3'. Cleavage occurs on the 3'-side of the TT dinucleotide at the point of strand exchange. HJ branch migration catalyzed by RuvA-RuvB allows RuvC to scan DNA until it finds its consensus sequence, where it cleaves and resolves the cruciform DNA. In Chlorobaculum parvum (strain DSM 263 / NCIMB 8327) (Chlorobium vibrioforme subsp. thiosulfatophilum), this protein is Crossover junction endodeoxyribonuclease RuvC.